We begin with the raw amino-acid sequence, 130 residues long: Fluoride-specific ion channel FluC (130 aa).

The next 4 membrane-spanning stretches (helical) occupy residues Phe-10–Phe-30, Gly-41–Met-61, Leu-72–Glu-89, and Leu-105–Leu-125. Na(+)-binding residues include Gly-80 and Thr-83.

Belongs to the fluoride channel Fluc/FEX (TC 1.A.43) family.

The protein localises to the cell inner membrane. It carries out the reaction fluoride(in) = fluoride(out). With respect to regulation, na(+) is not transported, but it plays an essential structural role and its presence is essential for fluoride channel function. Its function is as follows. Fluoride-specific ion channel. Important for reducing fluoride concentration in the cell, thus reducing its toxicity. In Synechococcus sp. (strain JA-2-3B'a(2-13)) (Cyanobacteria bacterium Yellowstone B-Prime), this protein is Fluoride-specific ion channel FluC.